The sequence spans 839 residues: MANILRKVIENDKGELRKLEKIAKKVESYADQMASLSDRDLQGKTLEFKERYQKGETLEQLLPEAFAVVREAAKRVLGLFPYRVQIMGGIVLHNGDVPEMRTGEGKTLTATMPVYLNAIAGEGVHVITVNEYLSTRDATEMGEVYSWLGLSVGINLAAKSPAEKREAYNCDITYSTNSEVGFDYLRDNMVVRQEDMVQRPLNFALVDEVDSVLIDEARTPLIVSGAVSSETNQLYIRADMFVKTLTSVDYVIDVPTKTIGLSDSGIDKAESYFNLSNLYDIENVALTHFIDNALRANYIMLLDIDYVVSEDGEILIVDQFTGRTMEGRRFSDGLHQAIEAKEGVRIQEESKTSASITYQNMFRMYKKLAGMTGTAKTEEEEFREVYNMRIIPIPTNRPIARIDHTDLLYPTLESKFRAVVEDVKTRHAKGQPILVGTVAVETSDLISRKLVEAGIPHEVLNAKNHFKEAQIIMNAGQRGAVTIATNMAGRGTDIKLGEGVRELGGLCVIGTERHESRRIDNQLRGRSGRQGDPGESQFYLSLEDDLMRRFGSDRIKAFLDRMKLDEEDTVIKSGMLGRQVESAQKRVEGNNYDTRKQVLQYDDVMREQREIIYANRRDVITANRDLGPEIKAMIKRTIDRAVDAHARSNRKDAVDAIVTFARTSLVPEESISAKELRGLKDEQIKEKLYQRALAIYDQQLSKLRDQEAIIEFQKVLILMIVDNKWTEHIDALDQLRNAVGLRGYAQNNPVVEYQAEGFKMFQDMIGAIEFDVTRTMMKAQIHEQERERASQRATTAAPQNIQSQQSANTDDLPKVERNEACPCGSGKKFKNCHGRKSFS.

Residues Gln85, 103–107 (GEGKT), and Asp493 contribute to the ATP site. Basic and acidic residues predominate over residues 780-790 (QIHEQERERAS). The disordered stretch occupies residues 780-839 (QIHEQERERASQRATTAAPQNIQSQQSANTDDLPKVERNEACPCGSGKKFKNCHGRKSFS). Positions 791-809 (QRATTAAPQNIQSQQSANT) are enriched in polar residues. The Zn(2+) site is built by Cys821, Cys823, Cys832, and His833. The span at 827–839 (KKFKNCHGRKSFS) shows a compositional bias: basic residues.

This sequence belongs to the SecA family. In terms of assembly, monomer and homodimer. Part of the essential Sec protein translocation apparatus which comprises SecA, SecYEG and auxiliary proteins SecDF. Other proteins may also be involved. Zn(2+) serves as cofactor.

It is found in the cell membrane. The protein resides in the cytoplasm. The catalysed reaction is ATP + H2O + cellular proteinSide 1 = ADP + phosphate + cellular proteinSide 2.. Its function is as follows. Part of the Sec protein translocase complex. Interacts with the SecYEG preprotein conducting channel. Has a central role in coupling the hydrolysis of ATP to the transfer of proteins into and across the cell membrane, serving as an ATP-driven molecular motor driving the stepwise translocation of polypeptide chains across the membrane. This is Protein translocase subunit SecA from Streptococcus pyogenes serotype M3 (strain ATCC BAA-595 / MGAS315).